The following is a 29-amino-acid chain: Bacteriocin (29 aa).

Its subcellular location is the secreted. Has antibacterial activity against strains of L.monocytogenes, L.lactis, B.subtilis, S.typhi, S.aureus, C.perfringens, E.aerogenes and M.luteus but not against E.coli, S.sonnei, S.pneumoniae, S.faecalis, P.aeruginosa, K.pneumoniae or P.vulgaris. In Lactococcus lactis subsp. lactis (Streptococcus lactis), this protein is Bacteriocin.